The sequence spans 128 residues: Large ribosomal subunit protein bL20c (128 aa).

Belongs to the bacterial ribosomal protein bL20 family. As to quaternary structure, component of the chloroplast large ribosomal subunit (LSU). Mature 70S chloroplast ribosomes of higher plants consist of a small (30S) and a large (50S) subunit. The 30S small subunit contains 1 molecule of ribosomal RNA (16S rRNA) and 24 different proteins. The 50S large subunit contains 3 rRNA molecules (23S, 5S and 4.5S rRNA) and 33 different proteins.

Its subcellular location is the plastid. It localises to the chloroplast. Functionally, component of the chloroplast ribosome (chloro-ribosome), a dedicated translation machinery responsible for the synthesis of chloroplast genome-encoded proteins, including proteins of the transcription and translation machinery and components of the photosynthetic apparatus. This chain is Large ribosomal subunit protein bL20c (rpl20), found in Spinacia oleracea (Spinach).